We begin with the raw amino-acid sequence, 273 residues long: Chlorophyll a-b binding protein 8, chloroplastic (273 aa).

Residues 1–32 constitute a chloroplast transit peptide; sequence MATQALISSSSISTSAEAARQIIGSRISQSVT. An N2-acetylarginine modification is found at Arg-33. Trp-56 lines the chlorophyll b pocket. The chlorophyll a site is built by Phe-76, Ser-82, and Glu-100. Arg-105 provides a ligand contact to chlorophyll b. Residues 106–126 traverse the membrane as a helical segment; that stretch reads FAMLGAAGAIAPEILGKAGLI. Residues Ile-140, Glu-167, and Arg-170 each coordinate chlorophyll b. Residues Lys-224, Glu-225, Asn-228, Arg-230, Gln-242, and His-257 each coordinate chlorophyll a. A helical membrane pass occupies residues 231–251; that stretch reads LAMLAILGYFIQALVTGVGPY.

Belongs to the light-harvesting chlorophyll a/b-binding (LHC) protein family. The LHC complex consists of chlorophyll a-b binding proteins. It depends on Binds at least 14 chlorophylls (8 Chl-a and 6 Chl-b) and carotenoids such as lutein and neoxanthin. as a cofactor. In terms of processing, photoregulated by reversible phosphorylation of its threonine residues.

The protein resides in the plastid. Its subcellular location is the chloroplast thylakoid membrane. Its function is as follows. The light-harvesting complex (LHC) functions as a light receptor, it captures and delivers excitation energy to photosystems with which it is closely associated. In Solanum lycopersicum (Tomato), this protein is Chlorophyll a-b binding protein 8, chloroplastic (CAB8).